The sequence spans 513 residues: Na(+)/H(+) antiporter NhaB (513 aa).

Helical transmembrane passes span 21–41 (ICII…SPFV), 88–108 (IMAN…IYFM), 119–139 (LLIV…SATF), 243–263 (LPVS…LEHF), 299–318 (MGIQ…LHLA), 322–344 (IIGL…HAIG), 350–370 (PMPF…IVDL), 389–409 (LALF…VFVG), and 477–497 (MALP…EFLL).

Belongs to the NhaB Na(+)/H(+) (TC 2.A.34) antiporter family.

It localises to the cell inner membrane. The enzyme catalyses 2 Na(+)(in) + 3 H(+)(out) = 2 Na(+)(out) + 3 H(+)(in). Functionally, na(+)/H(+) antiporter that extrudes sodium in exchange for external protons. The sequence is that of Na(+)/H(+) antiporter NhaB from Actinobacillus pleuropneumoniae serotype 5b (strain L20).